The chain runs to 351 residues: Beta-hexosaminidase (351 aa).

Residues aspartate 62, arginine 70, arginine 134, and 164–165 (KH) each bind substrate. Histidine 177 acts as the Proton donor/acceptor in catalysis. Aspartate 249 serves as the catalytic Nucleophile.

Belongs to the glycosyl hydrolase 3 family. NagZ subfamily.

Its subcellular location is the cytoplasm. The catalysed reaction is Hydrolysis of terminal non-reducing N-acetyl-D-hexosamine residues in N-acetyl-beta-D-hexosaminides.. It participates in cell wall biogenesis; peptidoglycan recycling. Functionally, plays a role in peptidoglycan recycling by cleaving the terminal beta-1,4-linked N-acetylglucosamine (GlcNAc) from peptide-linked peptidoglycan fragments, giving rise to free GlcNAc, anhydro-N-acetylmuramic acid and anhydro-N-acetylmuramic acid-linked peptides. This is Beta-hexosaminidase from Histophilus somni (strain 129Pt) (Haemophilus somnus).